Reading from the N-terminus, the 684-residue chain is Chaperone protein HtpG (684 aa).

Residues 1 to 329 (MSKKGTIGVT…SPDIPLNVSR (329 aa)) form an a; substrate-binding region. Residues 330–548 (SYLQSDANVK…FMRRMRDMAQ (219 aa)) form a b region. The tract at residues 549 to 684 (LQPGMSFYGE…EFIRRSQRLL (136 aa)) is c.

This sequence belongs to the heat shock protein 90 family. Homodimer.

The protein localises to the cytoplasm. Molecular chaperone. Has ATPase activity. The protein is Chaperone protein HtpG of Porphyromonas gingivalis (strain ATCC 33277 / DSM 20709 / CIP 103683 / JCM 12257 / NCTC 11834 / 2561).